The chain runs to 698 residues: MARTTPIERYRNIGIVAHVDAGKTTTTERVLFYTGMSHKIGEVHDGAATTDWMVQEQERGITITSAAVTTFWRGMEAQFAEHRINIIDTPGHVDFTIEVERSLRVLDGAVVVFCGSSGVEPQSETVWRQADKYHVPRLVFVNKMDRAGADFDRVINQIRNRLGATCVPIQLNIGAEENFKGVIDLIKMKAINWSETDQGMTFTYEDIPANLAAKAAEMHEYLVEAAAEASDELMNKYLEEGELSEVEIKTALRQRTINNEIVLATCGSAFKNKGVQAVLDAVVDFLPAPIDVPAITGIDESENEVKRPPDDNAPFAALAFKIATDPFVGTLTFIRVYSGVLESGAGVYNSVKQKRERVGRIVQMHANDRTELKEVRAGDIAAAIGLKDVTTGDTLCDNNHRVILERMDFPEPVITIAVEPRSKADQDKMGIALQKLAAEDPSFKVETDEESAQTLISGMGELHLDIIVDRMRREFGVECNVGKPQVAYRETIRSKVEVEGKFVRQSGGRGQFGHVWLRIEPLEEGAGYEFVNEIVGGVVPREFIPAVDKGIQEQMKNGVLAGYPVLDVRVSLFDGSYHDVDSNEMAFKIAGSMGFKKGALEATPVLLEPCMKVEVTTPEDYMGDVVGDLNRRRGIIEGMDDGIAGVKLVHAVVPLSEMFGYATDLRSASQGRASYSMEFLKYTDAPQNIAKAIIESRN.

Residues 8–290 (ERYRNIGIVA…AVVDFLPAPI (283 aa)) enclose the tr-type G domain. Residues 17 to 24 (AHVDAGKT), 88 to 92 (DTPGH), and 142 to 145 (NKMD) each bind GTP.

The protein belongs to the TRAFAC class translation factor GTPase superfamily. Classic translation factor GTPase family. EF-G/EF-2 subfamily.

It localises to the cytoplasm. Its function is as follows. Catalyzes the GTP-dependent ribosomal translocation step during translation elongation. During this step, the ribosome changes from the pre-translocational (PRE) to the post-translocational (POST) state as the newly formed A-site-bound peptidyl-tRNA and P-site-bound deacylated tRNA move to the P and E sites, respectively. Catalyzes the coordinated movement of the two tRNA molecules, the mRNA and conformational changes in the ribosome. The sequence is that of Elongation factor G 1 from Shewanella frigidimarina (strain NCIMB 400).